The sequence spans 384 residues: NAD-capped RNA hydrolase NPY1 (384 aa).

Zn(2+) contacts are provided by Cys-179, Cys-182, Cys-197, and Cys-206. The Nudix hydrolase domain maps to 219–351; that stretch reads PRTDPTVIIA…AGGYRVPFKN (133 aa). Residues Ala-256, Glu-272, Glu-276, and Glu-322 each contribute to the Mg(2+) site. Substrate-binding positions include 256–258, Glu-272, Glu-276, and Glu-322; that span reads AGF. The Nudix box motif lies at 257 to 278; that stretch reads GFMEPSETIEEACIREIWEETG. Residues 378 to 380 carry the Microbody targeting signal motif; it reads KTS.

The protein belongs to the Nudix hydrolase family. NudC subfamily. As to quaternary structure, homodimer. Mg(2+) serves as cofactor. Requires Zn(2+) as cofactor.

The protein localises to the peroxisome. It catalyses the reaction a 5'-end NAD(+)-phospho-ribonucleoside in mRNA + H2O = a 5'-end phospho-adenosine-phospho-ribonucleoside in mRNA + beta-nicotinamide D-ribonucleotide + 2 H(+). The enzyme catalyses NAD(+) + H2O = beta-nicotinamide D-ribonucleotide + AMP + 2 H(+). The catalysed reaction is NADH + H2O = reduced beta-nicotinamide D-ribonucleotide + AMP + 2 H(+). MRNA decapping enzyme that specifically removes the nicotinamide adenine dinucleotide (NAD) cap from a subset of mRNAs by hydrolyzing the diphosphate linkage to produce nicotinamide mononucleotide (NMN) and 5' monophosphate mRNA. The NAD-cap is present at the 5'-end of some RNAs; in contrast to the canonical N7 methylguanosine (m7G) cap, the NAD cap promotes mRNA decay. Mediates the hydrolysis of some nucleoside diphosphate derivatives. The polypeptide is NAD-capped RNA hydrolase NPY1 (Saccharomyces cerevisiae (strain ATCC 204508 / S288c) (Baker's yeast)).